The chain runs to 99 residues: Large ribosomal subunit protein uL23 (99 aa).

The protein belongs to the universal ribosomal protein uL23 family. As to quaternary structure, part of the 50S ribosomal subunit. Contacts protein L29, and trigger factor when it is bound to the ribosome.

One of the early assembly proteins it binds 23S rRNA. One of the proteins that surrounds the polypeptide exit tunnel on the outside of the ribosome. Forms the main docking site for trigger factor binding to the ribosome. The sequence is that of Large ribosomal subunit protein uL23 from Rhodopseudomonas palustris (strain HaA2).